We begin with the raw amino-acid sequence, 434 residues long: ATP-dependent protease ATPase subunit HslU (434 aa).

ATP contacts are provided by residues Val18, 60–65 (GVGKTE), Asp247, Glu312, and Arg384.

This sequence belongs to the ClpX chaperone family. HslU subfamily. In terms of assembly, a double ring-shaped homohexamer of HslV is capped on each side by a ring-shaped HslU homohexamer. The assembly of the HslU/HslV complex is dependent on binding of ATP.

The protein localises to the cytoplasm. Its function is as follows. ATPase subunit of a proteasome-like degradation complex; this subunit has chaperone activity. The binding of ATP and its subsequent hydrolysis by HslU are essential for unfolding of protein substrates subsequently hydrolyzed by HslV. HslU recognizes the N-terminal part of its protein substrates and unfolds these before they are guided to HslV for hydrolysis. The chain is ATP-dependent protease ATPase subunit HslU from Hyphomonas neptunium (strain ATCC 15444).